Reading from the N-terminus, the 396-residue chain is Imidazolonepropionase (396 aa).

Residues His69 and His71 each contribute to the Fe(3+) site. Zn(2+) contacts are provided by His69 and His71. 3 residues coordinate 4-imidazolone-5-propanoate: Arg78, Tyr136, and His163. Position 136 (Tyr136) interacts with N-formimidoyl-L-glutamate. Position 224 (His224) interacts with Fe(3+). His224 serves as a coordination point for Zn(2+). Residue Gln227 participates in 4-imidazolone-5-propanoate binding. Asp298 is a Fe(3+) binding site. Asp298 contacts Zn(2+). Residues Asn300 and Gly302 each coordinate N-formimidoyl-L-glutamate. Thr303 provides a ligand contact to 4-imidazolone-5-propanoate.

It belongs to the metallo-dependent hydrolases superfamily. HutI family. Zn(2+) is required as a cofactor. It depends on Fe(3+) as a cofactor.

Its subcellular location is the cytoplasm. It carries out the reaction 4-imidazolone-5-propanoate + H2O = N-formimidoyl-L-glutamate. The protein operates within amino-acid degradation; L-histidine degradation into L-glutamate; N-formimidoyl-L-glutamate from L-histidine: step 3/3. Functionally, catalyzes the hydrolytic cleavage of the carbon-nitrogen bond in imidazolone-5-propanoate to yield N-formimidoyl-L-glutamate. It is the third step in the universal histidine degradation pathway. This Cutibacterium acnes (strain DSM 16379 / KPA171202) (Propionibacterium acnes) protein is Imidazolonepropionase.